Here is a 175-residue protein sequence, read N- to C-terminus: Small ribosomal subunit protein uS5 (175 aa).

The S5 DRBM domain maps to 11-74 (LSEVLVDVNR…QAAKKRMMKV (64 aa)).

The protein belongs to the universal ribosomal protein uS5 family. In terms of assembly, part of the 30S ribosomal subunit. Contacts proteins S4 and S8.

In terms of biological role, with S4 and S12 plays an important role in translational accuracy. Functionally, located at the back of the 30S subunit body where it stabilizes the conformation of the head with respect to the body. The polypeptide is Small ribosomal subunit protein uS5 (Rickettsia typhi (strain ATCC VR-144 / Wilmington)).